The chain runs to 346 residues: Protein phosphatase 1 regulatory subunit 7 (346 aa).

The segment covering 1–13 has biased composition (acidic residues); that stretch reads MADEEGETEVQEM. The disordered stretch occupies residues 1 to 46; the sequence is MADEEGETEVQEMEVDRRESDESADDEAKEKPDRVDGGVKNGEVPL. Basic and acidic residues predominate over residues 14–37; that stretch reads EVDRRESDESADDEAKEKPDRVDG. LRR repeat units follow at residues 63-84, 85-106, 107-128, 129-150, 151-172, 173-194, 195-216, 217-238, 239-260, 261-282, and 283-304; these read EAED…EVLK, KVKT…EQLV, TLTE…ETLR, DLQI…ESLS, HLQR…GTLT, QLRL…DSLR, ELDS…ETLT, NLTV…QNLV, NLRE…ENNN, KLTT…KHLS, and ELQE…EELS. An LRRCT domain is found at 317–346; it reads NPLQKDAQYRRKIMLALPSVRQIDATFVRF.

Belongs to the SDS22 family.

It localises to the nucleus. Its function is as follows. Regulatory subunit of protein phosphatase 1. The sequence is that of Protein phosphatase 1 regulatory subunit 7 (ppp1r7) from Xenopus tropicalis (Western clawed frog).